The primary structure comprises 451 residues: Chromosomal replication initiator protein DnaA (451 aa).

A domain I, interacts with DnaA modulators region spans residues 1 to 77 (MTENEQIFWN…EVYNAQISVD (77 aa)). The tract at residues 77–110 (DYVFEEDLMIEQNQTKINQKPKQQALNSLPTVTS) is domain II. The domain III, AAA+ region stretch occupies residues 111 to 329 (DLNSKYSFEN…GALKDISLVA (219 aa)). ATP is bound by residues glycine 155, glycine 157, lysine 158, and threonine 159. Positions 330-451 (NFKQIDTITV…EIETIKNKIK (122 aa)) are domain IV, binds dsDNA.

This sequence belongs to the DnaA family. As to quaternary structure, oligomerizes as a right-handed, spiral filament on DNA at oriC.

It is found in the cytoplasm. Functionally, plays an essential role in the initiation and regulation of chromosomal replication. ATP-DnaA binds to the origin of replication (oriC) to initiate formation of the DNA replication initiation complex once per cell cycle. Binds the DnaA box (a 9 base pair repeat at the origin) and separates the double-stranded (ds)DNA. Forms a right-handed helical filament on oriC DNA; dsDNA binds to the exterior of the filament while single-stranded (ss)DNA is stabiized in the filament's interior. The ATP-DnaA-oriC complex binds and stabilizes one strand of the AT-rich DNA unwinding element (DUE), permitting loading of DNA polymerase. After initiation quickly degrades to an ADP-DnaA complex that is not apt for DNA replication. Binds acidic phospholipids. The half-life of ATP-DnaA is 12 minutes at 37 degrees Celsius, in E.coli the half-life is about 41 minutes. The chain is Chromosomal replication initiator protein DnaA from Streptococcus pyogenes serotype M1.